Consider the following 136-residue polypeptide: MASHEQSYKAGRAEGRAHEKGEQMKESMKEKAEAAKQKTMETAEAAKQKTMETAEAAKQKTRGAAETTNDKTKQTAGAARGKAEETKETSGGILQQAGEKVRNAAQGATDAVKHTFGMADADEDEHNYPATVTRKD.

2 disordered regions span residues 1-108 (MASH…AQGA) and 117-136 (GMADADEDEHNYPATVTRKD). Basic and acidic residues predominate over residues 11 to 58 (GRAEGRAHEKGEQMKESMKEKAEAAKQKTMETAEAAKQKTMETAEAAK). LEA 11-mer repeat repeat units lie at residues 31 to 41 (KAEAAKQKTME), 42 to 52 (TAEAAKQKTME), 53 to 63 (TAEAAKQKTRG), 64 to 74 (AAETTNDKTKQ), and 75 to 85 (TAGAARGKAEE).

The protein belongs to the LEA type 4 family.

Functionally, LEA proteins are late embryonic proteins abundant in higher plant seed embryos. There are two subsets of LEA proteins (5a and 5b), the first ones are expressed when the cotyledon weight reach 80 mg and the second set are expressed above 100 mg. The function of those proteins is not known. This is Late embryogenesis abundant protein D-7 from Gossypium hirsutum (Upland cotton).